We begin with the raw amino-acid sequence, 447 residues long: ATP-dependent protease ATPase subunit HslU (447 aa).

ATP is bound by residues Ile18, 60-65, Asp259, Glu325, and Arg397; that span reads GVGKTE.

Belongs to the ClpX chaperone family. HslU subfamily. As to quaternary structure, a double ring-shaped homohexamer of HslV is capped on each side by a ring-shaped HslU homohexamer. The assembly of the HslU/HslV complex is dependent on binding of ATP.

The protein resides in the cytoplasm. Functionally, ATPase subunit of a proteasome-like degradation complex; this subunit has chaperone activity. The binding of ATP and its subsequent hydrolysis by HslU are essential for unfolding of protein substrates subsequently hydrolyzed by HslV. HslU recognizes the N-terminal part of its protein substrates and unfolds these before they are guided to HslV for hydrolysis. This is ATP-dependent protease ATPase subunit HslU from Burkholderia cenocepacia (strain ATCC BAA-245 / DSM 16553 / LMG 16656 / NCTC 13227 / J2315 / CF5610) (Burkholderia cepacia (strain J2315)).